The chain runs to 314 residues: L-lactate dehydrogenase 1 (314 aa).

NAD(+) is bound by residues V16, D37, K42, Y68, and 82 to 83 (GL). Substrate-binding positions include Q85, R91, and 123-126 (NPVD). Residues 121–123 (ATN) and S146 each bind NAD(+). Position 151 to 154 (151 to 154 (DSAR)) interacts with substrate. 2 residues coordinate beta-D-fructose 1,6-bisphosphate: R156 and H171. The active-site Proton acceptor is the H178. Phosphotyrosine is present on Y223. T232 serves as a coordination point for substrate.

Belongs to the LDH/MDH superfamily. LDH family. In terms of assembly, homotetramer.

The protein localises to the cytoplasm. The enzyme catalyses (S)-lactate + NAD(+) = pyruvate + NADH + H(+). It functions in the pathway fermentation; pyruvate fermentation to lactate; (S)-lactate from pyruvate: step 1/1. Its activity is regulated as follows. Allosterically activated by fructose 1,6-bisphosphate (FBP). In terms of biological role, catalyzes the conversion of lactate to pyruvate. The sequence is that of L-lactate dehydrogenase 1 from Bacillus cereus (strain ATCC 14579 / DSM 31 / CCUG 7414 / JCM 2152 / NBRC 15305 / NCIMB 9373 / NCTC 2599 / NRRL B-3711).